Consider the following 716-residue polypeptide: ATP-dependent DNA helicase DinG (716 aa).

Residues 1–114 are HD1 domain N-terminus; that stretch reads MALTAALKAQ…PDLKFTAAFG (114 aa). Residues 17–294 enclose the Helicase ATP-binding domain; that stretch reads ALQEQIPDFI…TCMEQFRPKT (278 aa). The ATP site is built by Ile26, Gln31, Lys60, and Thr61. The segment at 115–216 is [4Fe-4S] domain; sequence RGRYVCPRNL…FFVARREIQE (102 aa). [4Fe-4S] cluster is bound by residues Cys120, Cys194, Cys199, and Cys205. The tract at residues 217–261 is HD1 domain middle; sequence AEVVVANHALVMAAMESEAVLPDPKNLLLVLDEGHHLPDVARDAL. The DEAH box motif lies at 248 to 251; the sequence is DEGH. The interval 262-438 is arch domain; sequence EMSAEITAPW…LHLWFHCVGI (177 aa). The tract at residues 439-491 is HD1 domain middle; the sequence is RVSDQLERLLWRSIPHIIVTSATLRSLNSFSRLQEMSGLKEKAGDRFVALDSP. The interval 492-716 is HD2 domain; that stretch reads FNHCEQGKIV…KTKSPRRRRR (225 aa). The ATP site is built by Asp599, Arg656, and Arg659.

Belongs to the helicase family. DinG subfamily. Type 1 sub-subfamily. In terms of assembly, monomer in solution. [4Fe-4S] cluster is required as a cofactor. The cofactor is Mg(2+).

The enzyme catalyses Couples ATP hydrolysis with the unwinding of duplex DNA at the replication fork by translocating in the 5'-3' direction. This creates two antiparallel DNA single strands (ssDNA). The leading ssDNA polymer is the template for DNA polymerase III holoenzyme which synthesizes a continuous strand.. The catalysed reaction is ATP + H2O = ADP + phosphate + H(+). Its activity is regulated as follows. ATPase activity is 15-fold stimulated by single-stranded DNA (ssDNA). Reduction of the [4Fe-4S] cluster reversibly switches off helicase activity. Remains fully active after exposure to 100-fold excess of hydrogen peroxide, but the [4Fe-4S] cluster can be efficiently modified by nitric oxide (NO), forming the DinG-bound dinitrosyl iron complex with the concomitant inactivation of helicase activity. Helicase activity on G-quadruplex DNA is inhibited by porphyrin derivatives meso-tetra (N-methyl-4-pyridyl) porphine tetra tosylate (T4) and N-methyl mesoporphyrin IX (NMM). Helicase activity on forked duplexes is not inhibited by T4 or NMM. G-quadruplex ligands such as Pyridostatin, PhenDC3, BRACO-19 and Netropsin can alter recognition and unwinding of G-quadruplex DNAs; the effect is both ligand- and G-quadruplex DNA-specific. Its function is as follows. DNA-dependent ATPase and 5'-3' DNA helicase. Can also unwind DNA:RNA hybrid duplexes. Is active on D-loops, R-loops, and on forked structures. Unwinds G-quadruplex DNA in a 5'-3' direction; unwinding efficiency differs on different substrates. Does not appear to unwind replication forks or Holliday junctions. Translocates on single-stranded (ss)DNA with a 5'-3' polarity. In vitro at high concentrations also unwinds in a 3'-5' direction. May be involved in recombinational DNA repair and the resumption of replication after DNA damage. The [4Fe-4S] cluster is redox active at cellular potentials and is involved in DNA-mediated charge-transport signaling between DNA repair proteins from distinct pathways. DinG cooperates at long-range with endonuclease III, a base excision repair enzyme, using DNA charge transport to redistribute to regions of DNA damage. Binds 10-11 nucleotides of ssDNA in a positively-charged groove across the helicase domains. In Escherichia coli (strain K12), this protein is ATP-dependent DNA helicase DinG.